The sequence spans 464 residues: ATP synthase subunit beta (464 aa).

ATP is bound at residue 152 to 159; that stretch reads GGAGVGKT.

The protein belongs to the ATPase alpha/beta chains family. As to quaternary structure, F-type ATPases have 2 components, CF(1) - the catalytic core - and CF(0) - the membrane proton channel. CF(1) has five subunits: alpha(3), beta(3), gamma(1), delta(1), epsilon(1). CF(0) has three main subunits: a(1), b(2) and c(9-12). The alpha and beta chains form an alternating ring which encloses part of the gamma chain. CF(1) is attached to CF(0) by a central stalk formed by the gamma and epsilon chains, while a peripheral stalk is formed by the delta and b chains.

It localises to the cell membrane. The catalysed reaction is ATP + H2O + 4 H(+)(in) = ADP + phosphate + 5 H(+)(out). Produces ATP from ADP in the presence of a proton gradient across the membrane. The catalytic sites are hosted primarily by the beta subunits. This is ATP synthase subunit beta from Clostridioides difficile (strain 630) (Peptoclostridium difficile).